A 346-amino-acid chain; its full sequence is MIKAGIIGATGYTGAELVRILSRHPEVELVALTSRSYAGEGMAGVYPSLTGYTNLTCENLTPDEVMDRAEVIFIALPHGHAVPVATRARERGIKVIDLGADWRFRNARTYEEWYKIQHGNHELAARAVYGLPEIHREAIRSAGLVANPGCYPTSAILGLAPLLKGGYIDPATIIIDAKSGVSGAGREARVTSLFVECNESINPYGVASHRHTPEIEQELSALAGKEVKVTFTPHLLPISRGILSTMYATLVRPASTEELRRVYEKFYAGEPFVHLLPPGQWPHTRWVYGSNNCHLNLAVDTRTGRVVVASAIDNLTKGASGQAVQNLNLMCGFPETMALEVPGLCP.

Cys-150 is a catalytic residue.

It belongs to the NAGSA dehydrogenase family. Type 1 subfamily.

The protein localises to the cytoplasm. It catalyses the reaction N-acetyl-L-glutamate 5-semialdehyde + phosphate + NADP(+) = N-acetyl-L-glutamyl 5-phosphate + NADPH + H(+). It functions in the pathway amino-acid biosynthesis; L-arginine biosynthesis; N(2)-acetyl-L-ornithine from L-glutamate: step 3/4. Functionally, catalyzes the NADPH-dependent reduction of N-acetyl-5-glutamyl phosphate to yield N-acetyl-L-glutamate 5-semialdehyde. The chain is N-acetyl-gamma-glutamyl-phosphate reductase from Moorella thermoacetica (strain ATCC 39073 / JCM 9320).